The chain runs to 348 residues: Holliday junction branch migration complex subunit RuvB (348 aa).

A large ATPase domain (RuvB-L) region spans residues 4-184 (ADRLIAASGR…FGIVQRLEFY (181 aa)). ATP-binding positions include I23, R24, G65, K68, T69, T70, 131–133 (EDF), R174, Y184, and R221. A Mg(2+)-binding site is contributed by T69. A small ATPAse domain (RuvB-S) region spans residues 185–255 (NDKDLSTIVS…VADMALNLLD (71 aa)). The head domain (RuvB-H) stretch occupies residues 258 to 348 (ERGFDHSDRR…GGDFSGPGDE (91 aa)). Residues R294, R313, and R318 each coordinate DNA.

It belongs to the RuvB family. In terms of assembly, homohexamer. Forms an RuvA(8)-RuvB(12)-Holliday junction (HJ) complex. HJ DNA is sandwiched between 2 RuvA tetramers; dsDNA enters through RuvA and exits via RuvB. An RuvB hexamer assembles on each DNA strand where it exits the tetramer. Each RuvB hexamer is contacted by two RuvA subunits (via domain III) on 2 adjacent RuvB subunits; this complex drives branch migration. In the full resolvosome a probable DNA-RuvA(4)-RuvB(12)-RuvC(2) complex forms which resolves the HJ.

It localises to the cytoplasm. The catalysed reaction is ATP + H2O = ADP + phosphate + H(+). Functionally, the RuvA-RuvB-RuvC complex processes Holliday junction (HJ) DNA during genetic recombination and DNA repair, while the RuvA-RuvB complex plays an important role in the rescue of blocked DNA replication forks via replication fork reversal (RFR). RuvA specifically binds to HJ cruciform DNA, conferring on it an open structure. The RuvB hexamer acts as an ATP-dependent pump, pulling dsDNA into and through the RuvAB complex. RuvB forms 2 homohexamers on either side of HJ DNA bound by 1 or 2 RuvA tetramers; 4 subunits per hexamer contact DNA at a time. Coordinated motions by a converter formed by DNA-disengaged RuvB subunits stimulates ATP hydrolysis and nucleotide exchange. Immobilization of the converter enables RuvB to convert the ATP-contained energy into a lever motion, pulling 2 nucleotides of DNA out of the RuvA tetramer per ATP hydrolyzed, thus driving DNA branch migration. The RuvB motors rotate together with the DNA substrate, which together with the progressing nucleotide cycle form the mechanistic basis for DNA recombination by continuous HJ branch migration. Branch migration allows RuvC to scan DNA until it finds its consensus sequence, where it cleaves and resolves cruciform DNA. This is Holliday junction branch migration complex subunit RuvB from Pseudomonas putida (strain ATCC 700007 / DSM 6899 / JCM 31910 / BCRC 17059 / LMG 24140 / F1).